Here is a 353-residue protein sequence, read N- to C-terminus: Lysophosphatidic acid receptor 3 (353 aa).

Residues 1-31 (MNECHYDKHMDFFYNRSNTDTVDDWTGTKLV) are Extracellular-facing. Asn-15 carries N-linked (GlcNAc...) asparagine glycosylation. A helical transmembrane segment spans residues 32 to 52 (IVLCVGTFFCLFIFFSNSLVI). Over 53–67 (AAVIKNRKFHFPFYY) the chain is Cytoplasmic. Residues 68–88 (LLANLAAADFFAGIAYVFLMF) traverse the membrane as a helical segment. Residues 89 to 101 (NTGPVSKTLTVNR) lie on the Extracellular side of the membrane. The chain crosses the membrane as a helical span at residues 102-124 (WFLRQGLLDSSLTASLTNLLVIA). Topologically, residues 125–146 (VERHMSIMRMRVHSNLTKKRVT) are cytoplasmic. A helical membrane pass occupies residues 147 to 167 (LLILLVWAIAIFMGAVPTLGW). At 168–186 (NCLCNISACSSLAPIYSRS) the chain is on the extracellular side. The N-linked (GlcNAc...) asparagine glycan is linked to Asn-172. The chain crosses the membrane as a helical span at residues 187–207 (YLVFWTVSNLMAFLIMVVVYL). Residues 208 to 240 (RIYVYVKRKTNVLSPHTSGSISRRRTPMKLMKT) are Cytoplasmic-facing. Residues 241-261 (VMTVLGAFVVCWTPGLVVLLL) form a helical membrane-spanning segment. Residues 262-276 (DGLNCRQCGVQHVKR) are Extracellular-facing. Residues 277–297 (WFLLLALLNSVVNPIIYSYKD) form a helical membrane-spanning segment. The Cytoplasmic segment spans residues 298 to 353 (EDMYGTMKKMICCFSQENPERRPSRIPSTVLSRSDTGSQYIEDSISQGAVCNKSTS). Cys-309 carries S-palmitoyl cysteine lipidation.

It belongs to the G-protein coupled receptor 1 family. As to expression, most abundantly expressed in prostate, testes, pancreas, and heart, with moderate levels in lung and ovary. No detectable expression in brain, placenta, liver, skeletal muscle, kidney, spleen, thymus, small intestine, colon, or peripheral blood leukocytes.

The protein resides in the cell membrane. In terms of biological role, receptor for lysophosphatidic acid (LPA), a mediator of diverse cellular activities. May play a role in the development of ovarian cancer. Seems to be coupled to the G(i)/G(o) and G(q) families of heteromeric G proteins. This is Lysophosphatidic acid receptor 3 (LPAR3) from Homo sapiens (Human).